Consider the following 273-residue polypeptide: Outer surface protein A (273 aa).

Residues 1–16 form the signal peptide; sequence MKKYLLGIGLILALIA. The N-palmitoyl cysteine moiety is linked to residue Cys-17. The S-diacylglycerol cysteine moiety is linked to residue Cys-17.

The protein belongs to the OspA lipoprotein family.

It localises to the cell outer membrane. Its subcellular location is the cell surface. This is Outer surface protein A from Borreliella burgdorferi (strain N40) (Borrelia burgdorferi).